Reading from the N-terminus, the 436-residue chain is Alpha-2 adrenergic receptor (436 aa).

Residues 1 to 27 are Extracellular-facing; it reads MDVTQSNATKDDANITVTPWPYTETAA. Residues Asn-7 and Asn-14 are each glycosylated (N-linked (GlcNAc...) asparagine). Residues 28–52 traverse the membrane as a helical segment; that stretch reads AFIILVVSVIILVSIVGNVLVIVAV. Over 53–64 the chain is Cytoplasmic; sequence LTSRALRAPQNL. A helical membrane pass occupies residues 65–90; that stretch reads FLVSLACADILVATLVIPFSLANEIM. Residues 91 to 100 are Extracellular-facing; sequence GYWFFGSTWC. Residues Cys-100 and Cys-173 are joined by a disulfide bond. A helical membrane pass occupies residues 101 to 123; sequence AFYLALDVLFCTSSIVHLCAISL. The Cytoplasmic segment spans residues 124 to 144; sequence DRYWSVTKAVSYNLKRTPKRI. Residues 145–167 traverse the membrane as a helical segment; that stretch reads KSMIAVVWVISAVISFPPLIMTK. Residues 168 to 178 are Extracellular-facing; sequence HDEKECLINDE. Residues 179–202 form a helical membrane-spanning segment; that stretch reads TWYILSSSLVSFFAPGFIMITVYC. Residues 203 to 329 are Cytoplasmic-facing; that stretch reads KIYRVAKQRS…QMREKRFTFV (127 aa). The tract at residues 238–280 is disordered; it reads KFEKESPSSNSSESNQRQEELDDIDLEESATSDNKPKSSRFSN. A compositionally biased stretch (acidic residues) spans 257–267; the sequence is ELDDIDLEESA. Residues 330-353 form a helical membrane-spanning segment; that stretch reads LTVVMGVFVLCWFPFFFTYSLHAI. The Extracellular segment spans residues 354-366; that stretch reads CGDSCEPPEALFK. Residues 367-387 form a helical membrane-spanning segment; sequence LFFWIGYCNSSVNPIIYTIFN. Topologically, residues 388–436 are cytoplasmic; the sequence is RDFRKAFKKICLLDCAAHLRDSCLGTLGRLNAKCIFECHQKSNQEETAN.

It belongs to the G-protein coupled receptor 1 family.

It is found in the cell membrane. Alpha-2 adrenergic receptors mediate the catecholamine-induced inhibition of adenylate cyclase through the action of G proteins. The polypeptide is Alpha-2 adrenergic receptor (Carassius auratus (Goldfish)).